The sequence spans 391 residues: Phosphoglycerate kinase (391 aa).

Substrate is bound by residues 21–23, arginine 36, 59–62, arginine 113, and arginine 146; these read DLN and HLGR. Residues lysine 197, glutamate 319, and 345 to 348 each bind ATP; that span reads GGDT.

It belongs to the phosphoglycerate kinase family. As to quaternary structure, monomer.

The protein resides in the cytoplasm. The enzyme catalyses (2R)-3-phosphoglycerate + ATP = (2R)-3-phospho-glyceroyl phosphate + ADP. Its pathway is carbohydrate degradation; glycolysis; pyruvate from D-glyceraldehyde 3-phosphate: step 2/5. This is Phosphoglycerate kinase from Xanthomonas axonopodis pv. citri (strain 306).